A 571-amino-acid chain; its full sequence is Phosphoribosylaminoimidazole carboxylase (571 aa).

The residue at position 37 (S37) is a Phosphoserine. An ATP-grasp domain is found at 110–298; it reads KEHLIKNGIA…QFEAHLRSIL (189 aa). 138–193 is a binding site for ATP; that stretch reads GRDLGFPFVLKSRTLAYDGRGNFVVKNKEMIPEALEVLKDRPLYAEKWAPFTKELA.

In the C-terminal section; belongs to the AIR carboxylase family. Class I subfamily.

It catalyses the reaction 5-amino-1-(5-phospho-D-ribosyl)imidazole-4-carboxylate + H(+) = 5-amino-1-(5-phospho-beta-D-ribosyl)imidazole + CO2. It participates in purine metabolism; IMP biosynthesis via de novo pathway; 5-amino-1-(5-phospho-D-ribosyl)imidazole-4-carboxylate from 5-amino-1-(5-phospho-D-ribosyl)imidazole (carboxylase route): step 1/1. This Saccharomyces cerevisiae (strain ATCC 204508 / S288c) (Baker's yeast) protein is Phosphoribosylaminoimidazole carboxylase (ADE2).